The following is a 276-amino-acid chain: uncharacterized protein (276 aa).

The AB hydrolase-1 domain occupies 20 to 137 (PVLIFIPGAN…PPINTFLPDS (118 aa)). The tract at residues 57–76 (GESELTEPLPDSASNPDSDY) is disordered.

This sequence belongs to the AB hydrolase superfamily.

This is an uncharacterized protein from Staphylococcus aureus (strain N315).